A 218-amino-acid polypeptide reads, in one-letter code: Glutathione S-transferase Mu 5 (218 aa).

One can recognise a GST N-terminal domain in the interval 2-88; that stretch reads PMTLGYWDIR…YIARKHNLCG (87 aa). Glutathione is bound by residues 7–8, 46–50, 59–60, and 72–73; these read YW, WLNEK, NL, and QS. A GST C-terminal domain is found at 90–207; sequence TEEEKIRVDI…MKSSQFLRGL (118 aa). Tyr-116 provides a ligand contact to substrate.

The protein belongs to the GST superfamily. Mu family. Homodimer.

It is found in the cytoplasm. The enzyme catalyses RX + glutathione = an S-substituted glutathione + a halide anion + H(+). Functionally, conjugation of reduced glutathione to a wide number of exogenous and endogenous hydrophobic electrophiles. The polypeptide is Glutathione S-transferase Mu 5 (GSTM5) (Homo sapiens (Human)).